Consider the following 1389-residue polypeptide: DNA-directed RNA polymerase subunit beta' (1389 aa).

The Zn(2+) site is built by cysteine 73, cysteine 75, cysteine 88, and cysteine 91. Mg(2+) contacts are provided by aspartate 464, aspartate 466, and aspartate 468. Zn(2+)-binding residues include cysteine 810, cysteine 884, cysteine 891, and cysteine 894.

The protein belongs to the RNA polymerase beta' chain family. The RNAP catalytic core consists of 2 alpha, 1 beta, 1 beta' and 1 omega subunit. When a sigma factor is associated with the core the holoenzyme is formed, which can initiate transcription. It depends on Mg(2+) as a cofactor. Zn(2+) serves as cofactor.

The enzyme catalyses RNA(n) + a ribonucleoside 5'-triphosphate = RNA(n+1) + diphosphate. In terms of biological role, DNA-dependent RNA polymerase catalyzes the transcription of DNA into RNA using the four ribonucleoside triphosphates as substrates. In Pelagibacter ubique (strain HTCC1062), this protein is DNA-directed RNA polymerase subunit beta'.